The following is a 279-amino-acid chain: Pantothenate synthetase (279 aa).

26-33 (MGNLHEGH) provides a ligand contact to ATP. H33 serves as the catalytic Proton donor. Q57 contacts (R)-pantoate. Q57 contacts beta-alanine. 144–147 (GKKD) contributes to the ATP binding site. Position 150 (Q150) interacts with (R)-pantoate. Residues V173 and 181–184 (LSSR) each bind ATP.

It belongs to the pantothenate synthetase family. As to quaternary structure, homodimer.

It is found in the cytoplasm. It carries out the reaction (R)-pantoate + beta-alanine + ATP = (R)-pantothenate + AMP + diphosphate + H(+). Its pathway is cofactor biosynthesis; (R)-pantothenate biosynthesis; (R)-pantothenate from (R)-pantoate and beta-alanine: step 1/1. In terms of biological role, catalyzes the condensation of pantoate with beta-alanine in an ATP-dependent reaction via a pantoyl-adenylate intermediate. This chain is Pantothenate synthetase, found in Burkholderia ambifaria (strain MC40-6).